Here is a 387-residue protein sequence, read N- to C-terminus: 3-ketoacyl-CoA thiolase (387 aa).

Residue C91 is the Acyl-thioester intermediate of the active site. Catalysis depends on proton acceptor residues H343 and C373.

It belongs to the thiolase-like superfamily. Thiolase family. In terms of assembly, heterotetramer of two alpha chains (FadB) and two beta chains (FadA).

The protein resides in the cytoplasm. The enzyme catalyses an acyl-CoA + acetyl-CoA = a 3-oxoacyl-CoA + CoA. It participates in lipid metabolism; fatty acid beta-oxidation. Functionally, catalyzes the final step of fatty acid oxidation in which acetyl-CoA is released and the CoA ester of a fatty acid two carbons shorter is formed. In Shewanella oneidensis (strain ATCC 700550 / JCM 31522 / CIP 106686 / LMG 19005 / NCIMB 14063 / MR-1), this protein is 3-ketoacyl-CoA thiolase.